The sequence spans 163 residues: Olfactory marker protein (163 aa).

N-acetylalanine is present on alanine 2.

The protein belongs to the olfactory marker protein family. Interacts with BEX1 and BEX2. As to expression, uniquely associated with mature olfactory receptor neurons.

It localises to the cytoplasm. Functionally, may act as a modulator of the olfactory signal-transduction cascade. The polypeptide is Olfactory marker protein (Omp) (Mus musculus (Mouse)).